Reading from the N-terminus, the 676-residue chain is Transketolase 7 (676 aa).

His-36 contributes to the substrate binding site. Thiamine diphosphate contacts are provided by residues His-76 and 125–127 (GPL). A Mg(2+)-binding site is contributed by Asp-166. Positions 167 and 196 each coordinate thiamine diphosphate. Mg(2+) is bound by residues Asn-196 and Ile-198. 3 residues coordinate substrate: His-273, Arg-367, and Ser-394. Residue His-273 coordinates thiamine diphosphate. Thiamine diphosphate is bound by residues Glu-421 and Phe-448. The active-site Proton donor is the Glu-421. Residues His-472, Asp-480, and Arg-531 each coordinate substrate.

It belongs to the transketolase family. In terms of assembly, homodimer. Mg(2+) serves as cofactor. It depends on Ca(2+) as a cofactor. The cofactor is Mn(2+). Co(2+) is required as a cofactor. Requires thiamine diphosphate as cofactor. As to expression, leaves and roots.

It catalyses the reaction D-sedoheptulose 7-phosphate + D-glyceraldehyde 3-phosphate = aldehydo-D-ribose 5-phosphate + D-xylulose 5-phosphate. Its function is as follows. Could be involved in the conversion of sugars, which are a major phenomenon in the rehydration process. Catalyzes the transfer of a two-carbon ketol group from a ketose donor to an aldose acceptor, via a covalent intermediate with the cofactor thiamine pyrophosphate. This chain is Transketolase 7 (TKT7), found in Craterostigma plantagineum (Blue gem).